The sequence spans 199 residues: MKQSHFFAHLSRMKLINRWPLMRNVRTENVSEHSLQVAMVAHALAAIKNRKFGGQLNAERIALLAMYHDASEVLTGDLPTPVKYFNSQIAQEYKAIEKIAQQKLVDMAPDELRDIFAPLIDENAWSEEEQAIVKQADALCAYLKCLEELSAGNNEFGLAKTRLEKTLELRRSQEMDYFMAVFVPSFHLSLDEISQDSPL.

Substrate is bound by residues 18–19 and His-33; that span reads RW. The HD domain maps to 30 to 142; it reads VSEHSLQVAM…VKQADALCAY (113 aa). A divalent metal cation contacts are provided by His-33, His-68, and Asp-69. Substrate-binding positions include Asp-69, 77–80, and Asp-137; that span reads DLPT. Asp-137 contacts a divalent metal cation.

The protein belongs to the 5DNU family. As to quaternary structure, homodimer. A divalent metal cation is required as a cofactor.

The protein resides in the cytoplasm. It carries out the reaction a 2'-deoxyribonucleoside 5'-phosphate + H2O = a 2'-deoxyribonucleoside + phosphate. In terms of biological role, catalyzes the strictly specific dephosphorylation of 2'-deoxyribonucleoside 5'-monophosphates. This chain is 5'-deoxynucleotidase YfbR, found in Salmonella agona (strain SL483).